A 574-amino-acid chain; its full sequence is Intraflagellar transport protein 56 homolog (574 aa).

TPR repeat units follow at residues 20–52, 57–90, and 151–184; these read AQKM…GNLD, DSLQ…DDAP, and LEDR…SPNL.

This sequence belongs to the IFT56 family. Component of the IFT complex B composed of at least che-2, che-13, dyf-1, dyf-3, dyf-6, dyf-11, dyf-13, ift-20, ift-74, ift-81, ifta-2, osm-1, osm-5 and osm-6.

It localises to the cell projection. The protein resides in the cilium. Its function is as follows. Component of the intraflagellar transport (IFT) complex B required for transport of proteins in the motile cilium. May be required for ciliary entrance and transport of specific ciliary cargo proteins such as che-3 which are related to motility. The chain is Intraflagellar transport protein 56 homolog from Caenorhabditis elegans.